Here is a 431-residue protein sequence, read N- to C-terminus: Phosphomethylpyrimidine synthase (431 aa).

Residues asparagine 66, methionine 95, tyrosine 124, histidine 163, 185–187, 226–229, and glutamate 265 each bind substrate; these read SRG and DGLR. Residue histidine 269 participates in Zn(2+) binding. Tyrosine 292 is a substrate binding site. A Zn(2+)-binding site is contributed by histidine 333. Positions 408, 411, and 415 each coordinate [4Fe-4S] cluster.

This sequence belongs to the ThiC family. [4Fe-4S] cluster serves as cofactor.

It carries out the reaction 5-amino-1-(5-phospho-beta-D-ribosyl)imidazole + S-adenosyl-L-methionine = 4-amino-2-methyl-5-(phosphooxymethyl)pyrimidine + CO + 5'-deoxyadenosine + formate + L-methionine + 3 H(+). It functions in the pathway cofactor biosynthesis; thiamine diphosphate biosynthesis. Functionally, catalyzes the synthesis of the hydroxymethylpyrimidine phosphate (HMP-P) moiety of thiamine from aminoimidazole ribotide (AIR) in a radical S-adenosyl-L-methionine (SAM)-dependent reaction. This is Phosphomethylpyrimidine synthase from Dehalococcoides mccartyi (strain ATCC BAA-2100 / JCM 16839 / KCTC 5957 / BAV1).